A 303-amino-acid chain; its full sequence is Glutathione transport system permease protein GsiD (303 aa).

6 helical membrane passes run 40 to 60 (AMTA…ARWI), 105 to 125 (LAAG…LGLL), 144 to 164 (LFAF…GSGI), 165 to 185 (ANVI…LVRG), 222 to 242 (IVVF…SLSF), and 266 to 286 (VIAP…VLAF). In terms of domain architecture, ABC transmembrane type-1 spans 101-290 (AQISLAAGVF…LTVLAFNLLG (190 aa)).

The protein belongs to the binding-protein-dependent transport system permease family. The complex is composed of two ATP-binding proteins (GsiA), two transmembrane proteins (GsiC and GsiD) and a solute-binding protein (GsiB).

The protein localises to the cell inner membrane. Part of the ABC transporter complex GsiABCD involved in glutathione import. Probably responsible for the translocation of the substrate across the membrane. In Escherichia coli O157:H7, this protein is Glutathione transport system permease protein GsiD.